Consider the following 1227-residue polypeptide: Tyrosine-protein kinase receptor ver-3 (1227 aa).

A signal peptide spans 1–17; that stretch reads MKLKLTVLLILVHASAS. The Extracellular segment spans residues 18-764; sequence YKPPAIEVED…VQVNNAPKGS (747 aa). Positions 20–110 constitute an Ig-like C2-type 1 domain; that stretch reads PPAIEVEDYQ…RESDTGTYSC (91 aa). C52 and C110 are disulfide-bonded. 7 N-linked (GlcNAc...) asparagine glycosylation sites follow: N119, N211, N245, N255, N381, N425, and N528. Residues 200 to 325 form the Ig-like C2-type 2 domain; sequence VNFECRYKKE…EHENKETKYT (126 aa). C204 and C313 form a disulfide bridge. Ig-like C2-type domains follow at residues 565 to 666 and 673 to 758; these read PHHE…TSID and PSIT…VQVN. 2 disulfides stabilise this stretch: C592–C650 and C696–C740. N697 carries N-linked (GlcNAc...) asparagine glycosylation. The helical transmembrane segment at 765 to 785 threads the bilayer; it reads LFFYWFLALLLLISIIAVFLL. Over 786–1227 the chain is Cytoplasmic; sequence TCKLRASNRL…ERYLIVESHA (442 aa). A Protein kinase domain is found at 847-1175; that stretch reads LEILNPIGSG…HMRDSSSQFL (329 aa). Residues 853 to 861 and K886 contribute to the ATP site; that span reads IGSGHFGVV. D1030 functions as the Proton acceptor in the catalytic mechanism. Positions 1194 to 1227 are disordered; it reads DWIQDSRPDVPNVSFQKSPKKQKEERYLIVESHA. Residues 1214 to 1227 show a composition bias toward basic and acidic residues; that stretch reads KQKEERYLIVESHA.

This sequence belongs to the protein kinase superfamily. Tyr protein kinase family. As to expression, expressed in the ALA neuron.

It localises to the cell membrane. It carries out the reaction L-tyrosyl-[protein] + ATP = O-phospho-L-tyrosyl-[protein] + ADP + H(+). Its function is as follows. Receptor tyrosine kinase which may be involved, downstream of pvf-1, in the positioning of ray 1, the most anterior ray sensillum in the male tail. The sequence is that of Tyrosine-protein kinase receptor ver-3 from Caenorhabditis elegans.